The chain runs to 463 residues: T-box transcription factor TBX1-A (463 aa).

Disordered stretches follow at residues 39–58 and 75–104; these read SPSP…PCSA and GASS…VKKN. Residues 75–96 show a composition bias toward low complexity; sequence GASSSSCASSTPGSGSTGSSSS. A DNA-binding region (T-box) is located at residues 119 to 297; that stretch reads LWDEFNQLGT…SNPFAKGFRD (179 aa). 2 disordered regions span residues 320 to 354 and 377 to 409; these read RSRN…PLHG and VPLS…PYKY. The segment covering 323-332 has biased composition (polar residues); that stretch reads NPVSSPTQNG. The span at 333 to 347 shows a compositional bias: basic and acidic residues; that stretch reads SDKDGDGRREYERDA. Positions 420–431 match the Nuclear localization signal motif; the sequence is KTRPAPYPLPTI.

Binds DNA as a dimer. Interacts with dscr6/ripply3.

It is found in the nucleus. Probable transcriptional regulator involved in developmental processes. Binds to the palindromic T site 5'-TTCACACCTAGGTGTGAA-3' DNA sequence. Induces pre-placodal ectoderm (PPE) gene expression in regions where RIPPLY3 is absent. Plays a role in the formation of the anteroposterior (AP) axis during embryonic development; required to establish the posterolateral border of the pre-placodal ectoderm (PPE) acting downstream of the retinoic acid receptor (RAR) signaling. The polypeptide is T-box transcription factor TBX1-A (tbx1-a) (Xenopus laevis (African clawed frog)).